We begin with the raw amino-acid sequence, 417 residues long: Serine hydroxymethyltransferase (417 aa).

(6S)-5,6,7,8-tetrahydrofolate-binding positions include Leu-121 and 125–127 (GHL). Lys-229 carries the post-translational modification N6-(pyridoxal phosphate)lysine. 355–357 (SPF) is a binding site for (6S)-5,6,7,8-tetrahydrofolate.

It belongs to the SHMT family. In terms of assembly, homodimer. Pyridoxal 5'-phosphate is required as a cofactor.

The protein localises to the cytoplasm. The enzyme catalyses (6R)-5,10-methylene-5,6,7,8-tetrahydrofolate + glycine + H2O = (6S)-5,6,7,8-tetrahydrofolate + L-serine. The protein operates within one-carbon metabolism; tetrahydrofolate interconversion. It participates in amino-acid biosynthesis; glycine biosynthesis; glycine from L-serine: step 1/1. In terms of biological role, catalyzes the reversible interconversion of serine and glycine with tetrahydrofolate (THF) serving as the one-carbon carrier. This reaction serves as the major source of one-carbon groups required for the biosynthesis of purines, thymidylate, methionine, and other important biomolecules. Also exhibits THF-independent aldolase activity toward beta-hydroxyamino acids, producing glycine and aldehydes, via a retro-aldol mechanism. The protein is Serine hydroxymethyltransferase of Tolumonas auensis (strain DSM 9187 / NBRC 110442 / TA 4).